The sequence spans 372 residues: 4-hydroxy-3-methylbut-2-en-1-yl diphosphate synthase (flavodoxin) (372 aa).

Residues Cys-270, Cys-273, Cys-305, and Glu-312 each coordinate [4Fe-4S] cluster.

The protein belongs to the IspG family. The cofactor is [4Fe-4S] cluster.

It carries out the reaction (2E)-4-hydroxy-3-methylbut-2-enyl diphosphate + oxidized [flavodoxin] + H2O + 2 H(+) = 2-C-methyl-D-erythritol 2,4-cyclic diphosphate + reduced [flavodoxin]. It participates in isoprenoid biosynthesis; isopentenyl diphosphate biosynthesis via DXP pathway; isopentenyl diphosphate from 1-deoxy-D-xylulose 5-phosphate: step 5/6. In terms of biological role, converts 2C-methyl-D-erythritol 2,4-cyclodiphosphate (ME-2,4cPP) into 1-hydroxy-2-methyl-2-(E)-butenyl 4-diphosphate. The polypeptide is 4-hydroxy-3-methylbut-2-en-1-yl diphosphate synthase (flavodoxin) (Salmonella typhi).